Here is a 432-residue protein sequence, read N- to C-terminus: Glutamine synthetase, chloroplastic (432 aa).

Residues 79-159 (IIAEYIWIGG…VICDTYTPQG (81 aa)) enclose the GS beta-grasp domain. The GS catalytic domain maps to 166–432 (KRHKAAQIFS…LAAQKLSLNV (267 aa)).

It belongs to the glutamine synthetase family. Homooctamer.

Its subcellular location is the plastid. The protein localises to the chloroplast. It catalyses the reaction L-glutamate + NH4(+) + ATP = L-glutamine + ADP + phosphate + H(+). Functionally, the light-modulated chloroplast enzyme, encoded by a nuclear gene and expressed primarily in leaves, is responsible for the reassimilation of the ammonia generated by photorespiration. This Daucus carota (Wild carrot) protein is Glutamine synthetase, chloroplastic (GLN2).